A 1120-amino-acid chain; its full sequence is MLQQKFPATAKCFFAIDNFTKHLNQDFILSVNNEEEALKLYKQAFFFSSNENIYYFPSYDTIPYDYTSPNTNIISRRAETLTKLITNNNSKLLITHAANLLNKLPPKDFFSKYFLKLYPKIKFTIDELSMLLVENSFTRNISSNDVGEFSVRGEIIDIILPGPKAYRINFSWDYIESIKEFDINTQISTKYCTELVISPVSEIVLNSKTIGNFKNNYLRNFGVNHTDNPLYEAVISGRKFPGYEQLLPLFYDSCSSLVDYLNDPICIFDNLSKQEILEFENSCNDFYLARSNANKLKVNNFYPALSPASLYFTASAITELLEQKNNILISYENSEQASLIGNISSTSFMEKKTIFDKLFELIKANFHKKIIICSSVLSSFERIKSIIQNYKYTFNEINKLDDAKASVINIGIIPLNQSFYTKEYLFITSSELLEEKTLYTNTNKKLKNILLELDNLAEGEFVVHKDHGIGQFLKLEAFEIQGKLHDFLKILYSGNDKLYVPVENIEVIKKYGSNNVELDKLGSAAWHKSKAKLKDRIKEISLHLIQIAAKRKLNISTPIEFDLEEYDKFCANFPFIETEDQLTAINDIRKDLTNGMLMDRLICGDVGFGKTEVAMRAVFMVAKSLNEYLPQVAVVVPTTILCSQHFSRFIERFKGFGLNIKQLSSVVSSQEANIIRLELASGKINIIIGTHTLLHKNIKFFNLKLLIIDEEQHFGVSQKEFLKSLKYSSHVLAMSATPIPRTLQMSLTGLKELSIIATPPLNRLEVRTSVMPFDTVIIRDALLREHFRGGRSFYVVPRIKDMEDIEKQLKQIVPELSYKIAHGKMTPSKIDEVMSEFYAGKFDILISTTIIESGIDITEANTMIIHNADTLGLSQLYQLRGRIGRGKIRGYAYLTVASNKKLMQHSLRRLEIIQNSCALGSGFTIASHDADLRGFGNLIGEEQSGQIREVGAELYQEMLEEQIALLKDESIVSEQSFIPNINLGLSVFIPDHYVSDSALKIALYRRIGNLSNEIEVEKFKDEMIDRFGLLPIEFNNLLDIVKIKLLCFKLNIENLDSGDDGFVIRFYKNADMSDKILKFVSRYSNQTKIKPNNKLVFIKKLVDKNIITEANQLLWTLLEI.

The Helicase ATP-binding domain maps to 591–756 (DLTNGMLMDR…LTGLKELSII (166 aa)). 604 to 611 (GDVGFGKT) is a binding site for ATP. A DEEQ box motif is present at residues 709–712 (DEEQ). The Helicase C-terminal domain maps to 777–933 (IIRDALLREH…TIASHDADLR (157 aa)).

The protein in the N-terminal section; belongs to the UvrB family. It in the C-terminal section; belongs to the helicase family. RecG subfamily.

The protein localises to the cytoplasm. Couples transcription and DNA repair by recognizing RNA polymerase (RNAP) stalled at DNA lesions. Mediates ATP-dependent release of RNAP and its truncated transcript from the DNA, and recruitment of nucleotide excision repair machinery to the damaged site. The sequence is that of Transcription-repair-coupling factor from Rickettsia typhi (strain ATCC VR-144 / Wilmington).